The sequence spans 118 residues: Large ribosomal subunit protein uL24 (118 aa).

Belongs to the universal ribosomal protein uL24 family. Part of the 50S ribosomal subunit.

In terms of biological role, one of two assembly initiator proteins, it binds directly to the 5'-end of the 23S rRNA, where it nucleates assembly of the 50S subunit. One of the proteins that surrounds the polypeptide exit tunnel on the outside of the subunit. In Prochlorococcus marinus subsp. pastoris (strain CCMP1986 / NIES-2087 / MED4), this protein is Large ribosomal subunit protein uL24.